A 185-amino-acid chain; its full sequence is Ribosome-recycling factor (185 aa).

This sequence belongs to the RRF family.

Its subcellular location is the cytoplasm. In terms of biological role, responsible for the release of ribosomes from messenger RNA at the termination of protein biosynthesis. May increase the efficiency of translation by recycling ribosomes from one round of translation to another. The chain is Ribosome-recycling factor from Nitrosomonas europaea (strain ATCC 19718 / CIP 103999 / KCTC 2705 / NBRC 14298).